The primary structure comprises 305 residues: Non-homologous end joining protein Ku (305 aa).

The region spanning Ser16 to Ala202 is the Ku domain. Residues Gly263–Ala305 are disordered.

It belongs to the prokaryotic Ku family. As to quaternary structure, homodimer. Interacts with LigD.

Its function is as follows. With LigD forms a non-homologous end joining (NHEJ) DNA repair enzyme, which repairs dsDNA breaks with reduced fidelity. Binds linear dsDNA with 5'- and 3'- overhangs but not closed circular dsDNA nor ssDNA. Recruits and stimulates the ligase activity of LigD. The sequence is that of Non-homologous end joining protein Ku from Acidobacterium capsulatum (strain ATCC 51196 / DSM 11244 / BCRC 80197 / JCM 7670 / NBRC 15755 / NCIMB 13165 / 161).